The following is a 128-amino-acid chain: Sm-like protein LSM1B (128 aa).

The Sm domain occupies 10 to 85; sequence YLSTSLASYL…VVLIGELDTE (76 aa).

The protein belongs to the snRNP Sm proteins family. In terms of assembly, component of the heptameric LSM1-LSM7 complex that forms a seven-membered ring structure with a donut shape. The LSM subunits are arranged in the order LSM1, LSM2, LSM3, LSM6, LSM5, LSM7 and LSM4. LSM1B subunit interacts only with its two neighboring subunits, LSM2 and LSM4. In terms of tissue distribution, expressed in roots, leaves, stems, flowers and siliques.

The protein resides in the cytoplasm. The protein localises to the P-body. Functionally, component of the cytoplasmic LSM1-LSM7 complex which is involved in mRNA degradation by promoting decapping and leading to accurate 5'-3' mRNA decay. LSM1A and LSM1B are essential for the formation of the cytoplasmic LSM1-LSM7 complex which regulates developmental gene expression by the decapping of specific development-related transcripts. Required for P-body formation during heat stress. This chain is Sm-like protein LSM1B, found in Arabidopsis thaliana (Mouse-ear cress).